Reading from the N-terminus, the 365-residue chain is Transcription elongation factor, mitochondrial (365 aa).

The N-terminal 40 residues, methionine 1 to lysine 40, are a transit peptide targeting the mitochondrion.

This sequence belongs to the TEFM family. Interacts with POLRMT.

It localises to the mitochondrion matrix. The protein localises to the mitochondrion nucleoid. Functionally, transcription elongation factor which increases mitochondrial RNA polymerase processivity. Regulates transcription of the mitochondrial genome, including genes important for the oxidative phosphorylation machinery. The polypeptide is Transcription elongation factor, mitochondrial (Tefm) (Rattus norvegicus (Rat)).